A 72-amino-acid chain; its full sequence is 3-deoxy-manno-octulosonate cytidylyltransferase (72 aa).

Belongs to the KdsB family. In terms of assembly, homodimer.

The protein localises to the cytoplasm. The catalysed reaction is 3-deoxy-alpha-D-manno-oct-2-ulosonate + CTP = CMP-3-deoxy-beta-D-manno-octulosonate + diphosphate. The protein operates within nucleotide-sugar biosynthesis; CMP-3-deoxy-D-manno-octulosonate biosynthesis; CMP-3-deoxy-D-manno-octulosonate from 3-deoxy-D-manno-octulosonate and CTP: step 1/1. It functions in the pathway bacterial outer membrane biogenesis; lipopolysaccharide biosynthesis. Activates KDO (a required 8-carbon sugar) for incorporation into bacterial lipopolysaccharide in Gram-negative bacteria. This chain is 3-deoxy-manno-octulosonate cytidylyltransferase (kpsU), found in Escherichia coli.